The chain runs to 87 residues: MSLIEFLFGRKQKTATVARDRLQIIIAQERAQEGQAPDYLPTLRKELMEVLSKYVNVSLDNIRISQEKQDGMDVLELNITLPEQKKV.

The protein belongs to the MinE family.

Prevents the cell division inhibition by proteins MinC and MinD at internal division sites while permitting inhibition at polar sites. This ensures cell division at the proper site by restricting the formation of a division septum at the midpoint of the long axis of the cell. This is Cell division topological specificity factor from Neisseria meningitidis serogroup C (strain 053442).